The following is a 660-amino-acid chain: Arginine--tRNA ligase, cytoplasmic (660 aa).

An N-acetylmethionine modification is found at Met1. A could be involved in the assembly of the multisynthetase complex region spans residues 1–72 (MDVLVSECSA…QAERNKPTKN (72 aa)). Residues 200–202 (SPN), His211, Tyr384, Asp388, and Gln412 each bind L-arginine. The short motif at 201–212 (PNIAKEMHVGHL) is the 'HIGH' region element. The interval 529 to 543 (NTAAYLLYAFTRIRS) is interaction with tRNA.

The protein belongs to the class-I aminoacyl-tRNA synthetase family. Interacts (via N-terminus) with AIMP1 (via N-terminus); this stimulates its catalytic activity. Interacts (via N-terminus) with LARS2 (via C-terminus). Monomer. Part of a multisubunit complex that groups tRNA ligases for Arg (RARS1), Asp (DARS1), Gln (QARS1), Ile (IARS1), Leu (LARS1), Lys (KARS1), Met (MARS1) the bifunctional ligase for Glu and Pro (EPRS1) and the auxiliary subunits AIMP1/p43, AIMP2/p38 and EEF1E1/p18. Interacts with QARS1. Part of a complex composed of RARS1, QARS1 and AIMP1.

It is found in the cytoplasm. It localises to the cytosol. The enzyme catalyses tRNA(Arg) + L-arginine + ATP = L-arginyl-tRNA(Arg) + AMP + diphosphate. In terms of biological role, forms part of a macromolecular complex that catalyzes the attachment of specific amino acids to cognate tRNAs during protein synthesis. Modulates the secretion of AIMP1 and may be involved in generation of the inflammatory cytokine EMAP2 from AIMP1. In Homo sapiens (Human), this protein is Arginine--tRNA ligase, cytoplasmic.